The sequence spans 290 residues: Protein male abnormal 3 (290 aa).

DNA-binding regions (DM) lie at residues 28 to 74 (CQRC…SKKK) and 94 to 142 (CARC…KLRR). Disordered stretches follow at residues 139 to 167 (KLRRSQQKSRDGKEPKRNSRRKSKDMDME) and 179 to 202 (IIGTSASPSPSSTTDTMSPSLSMS). Basic and acidic residues predominate over residues 146–155 (KSRDGKEPKR). The segment covering 182-202 (TSASPSPSSTTDTMSPSLSMS) has biased composition (low complexity).

As to expression, expression is undetectable in hermaphrodites, but persists in males. In males, expressed in cells of the tail tip.

It is found in the nucleus. Its function is as follows. Transcription factor which binds the DNA motif 5'-[CGA][TCA][TA]ACAATGT[AT][TGA]C-3', probably as a monomer. Acts partially redundantly with the transcription factor dmd-3 to coordinate tail tip cell fusion and retraction and thereby regulate male tail tip morphogenesis. Promotes male-specific development of two tissues, the peripheral nervous system and the intestine. In the peripheral nervous system, directs differentiation of sensory ray neuroblasts into peripheral sense organs. In the intestine, causes repression of vitellogenin gene transcription. The polypeptide is Protein male abnormal 3 (Caenorhabditis elegans).